The sequence spans 132 residues: Small ribosomal subunit protein uS11 (132 aa).

The protein belongs to the universal ribosomal protein uS11 family. As to quaternary structure, part of the 30S ribosomal subunit. Interacts with proteins S7 and S18. Binds to IF-3.

Functionally, located on the platform of the 30S subunit, it bridges several disparate RNA helices of the 16S rRNA. Forms part of the Shine-Dalgarno cleft in the 70S ribosome. The polypeptide is Small ribosomal subunit protein uS11 (Leifsonia xyli subsp. xyli (strain CTCB07)).